Reading from the N-terminus, the 91-residue chain is Sm-like protein LSM36B (91 aa).

In terms of domain architecture, Sm spans threonine 14 to threonine 86.

The protein belongs to the snRNP Sm proteins family. In terms of assembly, component of the heptameric LSM1-LSM7 complex that forms a seven-membered ring structure with a donut shape. The LSM subunits are arranged in the order LSM1, LSM2, LSM3, LSM6, LSM5, LSM7 and LSM4. Component of the heptameric LSM2-LSM8 complex that forms a seven-membered ring structure with a donut shape. The LSM subunits are arranged in the order LSM8, LSM2, LSM3, LSM6, LSM5, LSM7 and LSM4. LSM6B subunit interacts only with its two neighboring subunits, LSM3A or LSM3B and LSM5. As to expression, expressed in roots, leaves, stems, flowers and siliques.

The protein localises to the cytoplasm. It is found in the nucleus. Its function is as follows. Component of LSM protein complexes, which are involved in RNA processing. Component of the cytoplasmic LSM1-LSM7 complex which is involved in mRNA degradation by promoting decapping and leading to accurate 5'-3' mRNA decay. The cytoplasmic LSM1-LSM7 complex regulates developmental gene expression by the decapping of specific development-related transcripts. Component of the nuclear LSM2-LSM8 complex which is involved splicing nuclear mRNAs. LSM2-LSM8 binds directly to the U6 small nuclear RNAs (snRNAs) and is essential for accurate splicing of selected development-related mRNAs through the stabilization of the spliceosomal U6 snRNA. Plays a critical role in the regulation of development-related gene expression. The chain is Sm-like protein LSM36B from Arabidopsis thaliana (Mouse-ear cress).